Reading from the N-terminus, the 1114-residue chain is Brother of CDO (1114 aa).

Residues 1–30 form the signal peptide; sequence MLRGTMTAWRGMRPEVTLACLLLATAGCFA. Residues 31–855 lie on the Extracellular side of the membrane; it reads DLNEVPQVTV…MVARSSDLPY (825 aa). 4 consecutive Ig-like C2-type domains span residues 36–123, 129–213, 235–315, and 323–409; these read PQVT…ATVT, DFKL…VKTS, PEAQ…VILY, and PEVT…LRTS. 4 disulfide bridges follow: Cys-57–Cys-106, Cys-150–Cys-200, Cys-252–Cys-299, and Cys-344–Cys-391. 5 N-linked (GlcNAc...) asparagine glycosylation sites follow: Asn-65, Asn-76, Asn-98, Asn-189, and Asn-275. A disordered region spans residues 422-474; that stretch reads ELATGTPPVSPSKLGNPEQMLRGQPALPRPPTSVGPASPQCPGEKGQGAPAEA. 3 Fibronectin type-III domains span residues 474–571, 608–703, and 712–812; these read APII…GRRP, APDR…VVSG, and PVAG…TKAR. An N-linked (GlcNAc...) asparagine glycan is attached at Asn-517. The tract at residues 577–615 is disordered; sequence ASKEQQIQRDDPGASPQSSSQPDHGRLSPPEAPDRPTIS. 2 N-linked (GlcNAc...) asparagine glycosylation sites follow: Asn-725 and Asn-759. The disordered stretch occupies residues 812 to 833; it reads RKSSGQPGRLPPPTLAPPQPPL. A compositionally biased stretch (pro residues) spans 820 to 833; it reads RLPPPTLAPPQPPL. A helical membrane pass occupies residues 856–876; that stretch reads LIVGVVLGSIVLIIVTFIPFC. At 877-1114 the chain is on the cytoplasmic side; the sequence is LWRAWSKQKH…VSFETPPLTI (238 aa). A compositionally biased stretch (polar residues) spans 972–986; that stretch reads QTHLGNGYDPQSHQI. Residues 972 to 998 form a disordered region; the sequence is QTHLGNGYDPQSHQITRGPKSSPDEGS.

In terms of assembly, part of a complex that contains BOC, CDON, NEO1, cadherins and CTNNB1. Interacts with NTN3. Interacts with SHH, DHH and IHH. Interacts with CDH2 and CTNNB1. Interacts with CDH15 only during the early stages of myoblast differentiation. In terms of processing, N-glycosylated. Detected in skeletal muscle, heart, thymus, kidney and small intestine. Detected at lower levels in brain, placenta, lung and colon mucosa.

It localises to the cell membrane. In terms of biological role, component of a cell-surface receptor complex that mediates cell-cell interactions between muscle precursor cells. Promotes differentiation of myogenic cells. This Homo sapiens (Human) protein is Brother of CDO (BOC).